The chain runs to 482 residues: O-acyltransferase ausP (482 aa).

Catalysis depends on proton acceptor residues H180 and D412.

The protein belongs to the plant acyltransferase family. As to quaternary structure, monomer.

Its pathway is secondary metabolite biosynthesis; terpenoid biosynthesis. O-acyltransferase; part of the gene cluster B that mediates the biosynthesis of the fungal meroterpenoid acetoxydehydroaustin. The first step of the pathway is the synthesis of 3,5-dimethylorsellinic acid by the polyketide synthase ausA. 3,5-dimethylorsellinic acid is then prenylated by the polyprenyl transferase ausN. Further epoxidation by the FAD-dependent monooxygenase ausM and cyclization by the probable terpene cyclase ausL lead to the formation of protoaustinoid A. Protoaustinoid A is then oxidized to spiro-lactone preaustinoid A3 by the combined action of the FAD-binding monooxygenases ausB and ausC, and the dioxygenase ausE. Acid-catalyzed keto-rearrangement and ring contraction of the tetraketide portion of preaustinoid A3 by ausJ lead to the formation of preaustinoid A4. The aldo-keto reductase ausK, with the help of ausH, is involved in the next step by transforming preaustinoid A4 into isoaustinone which is in turn hydroxylated by the P450 monooxygenase ausI to form austinolide. The cytochrome P450 monooxygenase ausG then modifies austinolide to austinol. Austinol is further acetylated to austin by the O-acetyltransferase ausP, which spontaneously changes to dehydroaustin. The cytochrome P450 monooxygenase then converts dehydroaustin is into 7-dehydrodehydroaustin. The hydroxylation catalyzed by ausR permits the second O-acetyltransferase ausQ to add an additional acetyl group to the molecule, leading to the formation of acetoxydehydroaustin. Due to genetic rearrangements of the clusters and the subsequent loss of some enzymes, the end product of the Penicillium brasilianum austinoid biosynthesis clusters is acetoxydehydroaustin. In Penicillium brasilianum, this protein is O-acyltransferase ausP.